Reading from the N-terminus, the 339-residue chain is Ketol-acid reductoisomerase (NADP(+)) (339 aa).

In terms of domain architecture, KARI N-terminal Rossmann spans 1–182; it reads MRVYYDRDAD…GGGRAGIIET (182 aa). Residues 24–27, Arg48, Ser51, Thr53, and 83–86 contribute to the NADP(+) site; these read YGSQ and DELQ. His108 is a catalytic residue. Residue Gly134 participates in NADP(+) binding. The KARI C-terminal knotted domain occupies 183–328; that stretch reads TFREECETDL…AKLREMMPWI (146 aa). Mg(2+)-binding residues include Asp191, Glu195, Glu227, and Glu231. Residue Ser252 coordinates substrate.

Belongs to the ketol-acid reductoisomerase family. Mg(2+) is required as a cofactor.

It carries out the reaction (2R)-2,3-dihydroxy-3-methylbutanoate + NADP(+) = (2S)-2-acetolactate + NADPH + H(+). The catalysed reaction is (2R,3R)-2,3-dihydroxy-3-methylpentanoate + NADP(+) = (S)-2-ethyl-2-hydroxy-3-oxobutanoate + NADPH + H(+). Its pathway is amino-acid biosynthesis; L-isoleucine biosynthesis; L-isoleucine from 2-oxobutanoate: step 2/4. It participates in amino-acid biosynthesis; L-valine biosynthesis; L-valine from pyruvate: step 2/4. Functionally, involved in the biosynthesis of branched-chain amino acids (BCAA). Catalyzes an alkyl-migration followed by a ketol-acid reduction of (S)-2-acetolactate (S2AL) to yield (R)-2,3-dihydroxy-isovalerate. In the isomerase reaction, S2AL is rearranged via a Mg-dependent methyl migration to produce 3-hydroxy-3-methyl-2-ketobutyrate (HMKB). In the reductase reaction, this 2-ketoacid undergoes a metal-dependent reduction by NADPH to yield (R)-2,3-dihydroxy-isovalerate. In Rhodopseudomonas palustris (strain BisA53), this protein is Ketol-acid reductoisomerase (NADP(+)).